We begin with the raw amino-acid sequence, 577 residues long: Aspartate--tRNA ligase (577 aa).

L-aspartate is bound at residue E171. The tract at residues 195–198 (QLFK) is aspartate. R217 is an L-aspartate binding site. ATP-binding positions include 217 to 219 (RDE) and Q226. Residue H437 coordinates L-aspartate. E472 lines the ATP pocket. Residue R479 participates in L-aspartate binding. ATP is bound at residue 524-527 (GFDR).

The protein belongs to the class-II aminoacyl-tRNA synthetase family. Type 1 subfamily. Homodimer.

The protein localises to the cytoplasm. It catalyses the reaction tRNA(Asp) + L-aspartate + ATP = L-aspartyl-tRNA(Asp) + AMP + diphosphate. In terms of biological role, catalyzes the attachment of L-aspartate to tRNA(Asp) in a two-step reaction: L-aspartate is first activated by ATP to form Asp-AMP and then transferred to the acceptor end of tRNA(Asp). In Deinococcus deserti (strain DSM 17065 / CIP 109153 / LMG 22923 / VCD115), this protein is Aspartate--tRNA ligase.